A 226-amino-acid chain; its full sequence is ATP synthase subunit C lysine N-methyltransferase (226 aa).

A helical transmembrane segment spans residues 35–55; it reads VIGGTLVALYAVATPFVAPAL. Positions 48 to 82 are required for mitochondrial location; sequence TPFVAPALRKLCLPYVPATTTQVKNVLKMLRSRTG.

Belongs to the ANT/ATPSC lysine N-methyltransferase family.

The protein localises to the mitochondrion membrane. Functionally, mitochondrial protein-lysine N-methyltransferase that promotes chronic pain. Involved in persistent inflammatory and neuropathic pain: methyltransferase activity in the mitochondria of sensory neurons promotes chronic pain via a pathway that depends on the production of reactive oxygen species (ROS) and on the engagement of spinal cord microglia. Protein-lysine N-methyltransferase activity is dependent on S-adenosyl-L-methionine. The sequence is that of ATP synthase subunit C lysine N-methyltransferase (atpsckmt) from Xenopus laevis (African clawed frog).